The primary structure comprises 185 residues: Dual-action ribosomal maturation protein DarP (185 aa).

The disordered stretch occupies residues 1 to 22 (MWKNGAMRGCNKETGEFLGPSR).

It belongs to the DarP family.

The protein localises to the cytoplasm. In terms of biological role, member of a network of 50S ribosomal subunit biogenesis factors which assembles along the 30S-50S interface, preventing incorrect 23S rRNA structures from forming. Promotes peptidyl transferase center (PTC) maturation. The chain is Dual-action ribosomal maturation protein DarP from Xylella fastidiosa (strain 9a5c).